Here is a 107-residue protein sequence, read N- to C-terminus: Small ribosomal subunit protein uS17 (107 aa).

The protein belongs to the universal ribosomal protein uS17 family. As to quaternary structure, part of the 30S ribosomal subunit.

Its function is as follows. One of the primary rRNA binding proteins, it binds specifically to the 5'-end of 16S ribosomal RNA. This is Small ribosomal subunit protein uS17 from Thermotoga petrophila (strain ATCC BAA-488 / DSM 13995 / JCM 10881 / RKU-1).